The primary structure comprises 278 residues: HTH-type transcriptional activator RhaS (278 aa).

The 99-residue stretch at 174-272 folds into the HTH araC/xylS-type domain; the sequence is NLLLAWLEDH…NWSPRDIRQG (99 aa). 2 DNA-binding regions (H-T-H motif) span residues 191–212 and 239–262; these read DAVA…KQQT and VTDI…RREF.

Binds DNA as a dimer.

It is found in the cytoplasm. In terms of biological role, activates expression of the rhaBAD and rhaT operons. The sequence is that of HTH-type transcriptional activator RhaS from Shigella dysenteriae serotype 1 (strain Sd197).